The primary structure comprises 995 residues: Endosome/lysosome-associated apoptosis and autophagy regulator family member 2 (995 aa).

An N-terminal signal peptide occupies residues 1 to 21 (MGVFCWSGCLVISLQLLLGAA). Topologically, residues 22–895 (LDNLSTCKEE…ACESIDFWLK (874 aa)) are extracellular. N-linked (GlcNAc...) asparagine glycosylation is found at Asn-24, Asn-136, Asn-245, Asn-372, Asn-527, Asn-649, Asn-683, Asn-700, and Asn-758. Residues 639-843 (SECLVTYTNE…LWETAEACPL (205 aa)) form the MRH domain. Intrachain disulfides connect Cys-641-Cys-687 and Cys-697-Cys-725. 2 disulfide bridges follow: Cys-793–Cys-829 and Cys-805–Cys-841. The N-linked (GlcNAc...) asparagine glycan is linked to Asn-883. Residues 896-916 (VGAGVGAFTAVLLIALTCYFW) form a helical membrane-spanning segment. Topologically, residues 917 to 995 (KKNQKLEYKY…QLKSSRAQNI (79 aa)) are cytoplasmic.

The protein belongs to the ELAPOR family. In terms of tissue distribution, expressed in the animal half of the embryo during gastrulation, becoming restricted to the ventral ectoderm at stage 12.5. At the neurula stage, expressed in the anterior ectoderm surrounding the neural plate, and weakly in the epidermis. Expression is especially high in the presumptive hatching gland and cement gland regions. Surprisingly, by the tailbud stage (stage 22), expression is limited to the hatching gland and is not seen in the cement gland. Conversely, in tadpoles expressed broadly in the head, heart and fin. Expression in the head is seen in the primary mouth and in the brain, eyes, otic vesicles and olfactory pits.

The protein localises to the cell membrane. Functionally, functions as a regulator of the BMP signaling pathway and is involved in epidermal differentiation. The protein is Endosome/lysosome-associated apoptosis and autophagy regulator family member 2 (elapor2) of Xenopus laevis (African clawed frog).